The chain runs to 711 residues: Protein mono-ADP-ribosyltransferase PARP12 (711 aa).

3 C3H1-type zinc fingers span residues L103–K128, I164–H188, and I189–T211. The interval S247–Q279 is disordered. S268 carries the phosphoserine modification. 2 consecutive C3H1-type zinc fingers follow at residues E280–L307 and E281–H306. WWE domains are found at residues P308–T371 and S374–R468. C484 is subject to ADP-ribosylcysteine. The PARP catalytic domain maps to I494 to T708. ADP-ribosyl aspartic acid is present on residues D610 and D621.

The protein belongs to the ARTD/PARP family. In terms of assembly, interacts with PARP11; this interaction plays a key role in zika virus suppression. Interacts with ISG15. Auto-mono-ADP-ribosylated. In terms of processing, phosphorylated by PRKD1.

The protein resides in the nucleus. The protein localises to the golgi apparatus. Its subcellular location is the trans-Golgi network. It localises to the cytoplasm. It is found in the stress granule. The catalysed reaction is L-aspartyl-[protein] + NAD(+) = 4-O-(ADP-D-ribosyl)-L-aspartyl-[protein] + nicotinamide. The enzyme catalyses L-cysteinyl-[protein] + NAD(+) = S-(ADP-D-ribosyl)-L-cysteinyl-[protein] + nicotinamide + H(+). Its function is as follows. Mono-ADP-ribosyltransferase that mediates mono-ADP-ribosylation of target proteins. Displays anti-alphavirus activity during IFN-gamma immune activation by directly ADP-ribosylating the alphaviral non-structural proteins nsP3 and nsP4. Acts as a component of the PRKD1-driven regulatory cascade that selectively controls a major branch of the basolateral transport pathway by catalyzing the MARylation of GOLGA1. Acts also as a key regulator of mitochondrial function, protein translation, and inflammation. Inhibits PINK1/Parkin-dependent mitophagy and promotes cartilage degeneration by inhibiting the ubiquitination and SUMOylation of MFN1/2 by upregulating ISG15 and ISGylation. This chain is Protein mono-ADP-ribosyltransferase PARP12, found in Mus musculus (Mouse).